We begin with the raw amino-acid sequence, 295 residues long: Malonyl-[acyl-carrier protein] O-methyltransferase (295 aa).

It belongs to the methyltransferase superfamily.

The catalysed reaction is malonyl-[ACP] + S-adenosyl-L-methionine = malonyl-[ACP] methyl ester + S-adenosyl-L-homocysteine. The protein operates within cofactor biosynthesis; biotin biosynthesis. Functionally, converts the free carboxyl group of a malonyl-thioester to its methyl ester by transfer of a methyl group from S-adenosyl-L-methionine (SAM). It allows to synthesize pimeloyl-ACP via the fatty acid synthetic pathway. The sequence is that of Malonyl-[acyl-carrier protein] O-methyltransferase from Xylella fastidiosa (strain M23).